The following is a 533-amino-acid chain: MSWAARPPFLPQRHAAGQCGPVGVRKEMHCGVASRWRRRRPWLDPAAAAAAAVAGGEQQTPEPEPGEAGRDGMGDSGRDSRSPDSSSPNPLPQGVPPPSPPGPPLPPSTAPSLGGSGAPPPPPMPPPPLGSPFPVISSSMGSPGLPPPAPPGFSGPVSSPQINSTVSLPGGGSGPPEDVKPPVLGVRGLHCPPPPGGPGAGKRLCAICGDRSSGKHYGVYSCEGCKGFFKRTIRKDLTYSCRDNKDCTVDKRQRNRCQYCRYQKCLATGMKREAVQEERQRGKDKDGDGEGAGGAPEEMPVDRILEAELAVEQKSDQGVEGPGGTGGSGSSPNDPVTNICQAADKQLFTLVEWAKRIPHFSSLPLDDQVILLRAGWNELLIASFSHRSIDVRDGILLATGLHVHRNSAHSAGVGAIFDRVLTELVSKMRDMRMDKTELGCLRAIILFNPDAKGLSNPSEVEVLREKVYASLETYCKQKYPEQQGRFAKLLLRLPALRSIGLKCLEHLFFFKLIGDTPIDTFLMEMLEAPHQLA.

The disordered stretch occupies residues 1–23 (MSWAARPPFLPQRHAAGQCGPVG). The tract at residues 1–204 (MSWAARPPFL…PGGPGAGKRL (204 aa)) is modulating. Arg25 carries the post-translational modification Omega-N-methylarginine. A disordered region spans residues 36 to 181 (WRRRRPWLDP…GSGPPEDVKP (146 aa)). Positions 46-61 (AAAAAAAVAGGEQQTP) are enriched in low complexity. Residues 67–82 (EAGRDGMGDSGRDSRS) are compositionally biased toward basic and acidic residues. 2 stretches are compositionally biased toward pro residues: residues 89–109 (NPLPQGVPPPSPPGPPLPPST) and 118–131 (APPPPPMPPPPLGS). The span at 132–143 (PFPVISSSMGSP) shows a compositional bias: low complexity. The segment covering 144 to 153 (GLPPPAPPGF) has biased composition (pro residues). NR C4-type zinc fingers lie at residues 205–225 (CAICGDRSSGKHYGVYSCEGC) and 241–265 (CRDNKDCTVDKRQRNRCQYCRYQKC). The nuclear receptor DNA-binding region spans 205–270 (CAICGDRSSG…RYQKCLATGM (66 aa)). The tract at residues 271–295 (KREAVQEERQRGKDKDGDGEGAGGA) is hinge. The segment covering 276 to 288 (QEERQRGKDKDGD) has biased composition (basic and acidic residues). 2 disordered regions span residues 276-299 (QEERQRGKDKDGDGEGAGGAPEEM) and 313-336 (QKSDQGVEGPGGTGGSGSSPNDPV). In terms of domain architecture, NR LBD spans 296 to 529 (PEEMPVDRIL…TFLMEMLEAP (234 aa)). Residues 320–329 (EGPGGTGGSG) are compositionally biased toward gly residues.

The protein belongs to the nuclear hormone receptor family. NR2 subfamily. Homodimer (in vitro). Heterodimer with other retinoic acid receptor family members. Binds DNA preferentially as a RAR/RXR heterodimer. Interacts with NR1H3. Interacts with AKAP13. As to expression, expressed in aortic endothelial cells (at protein level). Expressed in monocytes. Expressed in a variety of tumor cell lines.

It is found in the nucleus. Its subcellular location is the cytoplasm. Its function is as follows. Receptor for retinoic acid. Retinoic acid receptors bind as heterodimers to their target response elements in response to their ligands, all-trans or 9-cis retinoic acid, and regulate gene expression in various biological processes. The RAR/RXR heterodimers bind to the retinoic acid response elements (RARE). The polypeptide is Retinoic acid receptor RXR-beta (RXRB) (Homo sapiens (Human)).